Here is a 426-residue protein sequence, read N- to C-terminus: C4-dicarboxylate transport protein (426 aa).

Helical transmembrane passes span 8–28, 44–64, 78–98, 148–168, 184–204, 222–242, 297–317, and 355–375; these read VLYVQVIVAIIIGIALGHFYP, LIKMVIGPIIFCTVVTGIAGM, LLYFEIVSTFALILGLAATHL, GEILQILLIALLFGAVLAHVG, ILFGMVGIITKLAPIGAFGAM, LIGTFYLTSIVFVVVVLGFIA, GYSFNLDGTNIYMTMAVLFIA, and AATLAVVPTIPLSGMVLILGI.

Belongs to the dicarboxylate/amino acid:cation symporter (DAACS) (TC 2.A.23) family.

The protein localises to the cell inner membrane. In terms of biological role, responsible for the transport of dicarboxylates such as succinate, fumarate, and malate from the periplasm across the membrane. The chain is C4-dicarboxylate transport protein from Paraburkholderia phymatum (strain DSM 17167 / CIP 108236 / LMG 21445 / STM815) (Burkholderia phymatum).